The sequence spans 387 residues: Histone deacetylase 2 (387 aa).

The segment at 73–382 (KVSIIYSSSY…IENLSRQGLI (310 aa)) is histone deacetylase. H201 acts as the Proton donor/acceptor in catalysis. Positions 238, 240, and 318 each coordinate Zn(2+).

Belongs to the histone deacetylase family. HD type 3 subfamily. Zn(2+) serves as cofactor.

The protein resides in the nucleus. The enzyme catalyses N(6)-acetyl-L-lysyl-[histone] + H2O = L-lysyl-[histone] + acetate. Responsible for the deacetylation of lysine residues on the N-terminal part of the core histones (H2A, H2B, H3 and H4). Histone deacetylation gives a tag for epigenetic repression and plays an important role in transcriptional regulation, cell cycle progression and developmental events. Histone deacetylases act via the formation of large multiprotein complexes. This Arabidopsis thaliana (Mouse-ear cress) protein is Histone deacetylase 2 (HDA2).